We begin with the raw amino-acid sequence, 484 residues long: uncharacterized protein (484 aa).

It to M.thermoautotrophicum MTH1153.

This is an uncharacterized protein from Methanocaldococcus jannaschii (strain ATCC 43067 / DSM 2661 / JAL-1 / JCM 10045 / NBRC 100440) (Methanococcus jannaschii).